The primary structure comprises 156 residues: Small ribosomal subunit protein uS7 (156 aa).

It belongs to the universal ribosomal protein uS7 family. Part of the 30S ribosomal subunit. Contacts proteins S9 and S11.

Its function is as follows. One of the primary rRNA binding proteins, it binds directly to 16S rRNA where it nucleates assembly of the head domain of the 30S subunit. Is located at the subunit interface close to the decoding center, probably blocks exit of the E-site tRNA. This is Small ribosomal subunit protein uS7 from Dehalococcoides mccartyi (strain ATCC BAA-2100 / JCM 16839 / KCTC 5957 / BAV1).